Consider the following 715-residue polypeptide: ATP-dependent DNA helicase Hel308 (715 aa).

The short motif at 1–29 (MKVGELNVSEKIKEILRERGIEELYPPQA) is the Q motif element. ATP contacts are provided by residues glutamine 28 and 46-53 (IPTASGKT). One can recognise a Helicase ATP-binding domain in the interval 33 to 197 (TSGVLEGENL…WLNAKLIRSD (165 aa)). Residues 145–148 (DEIH) carry the DEAH box motif. The 197-residue stretch at 226 to 422 (WEELVYDAVK…ILRSQILALI (197 aa)) folds into the Helicase C-terminal domain.

This sequence belongs to the helicase family. Hel308 subfamily. In terms of assembly, monomer.

The catalysed reaction is Couples ATP hydrolysis with the unwinding of duplex DNA by translocating in the 3'-5' direction.. The enzyme catalyses ATP + H2O = ADP + phosphate + H(+). In terms of biological role, DNA-dependent ATPase and 3'-5' DNA helicase that may be involved in repair of stalled replication forks. Functionally, rapidly unwinds double-stranded (ds)DNA with a 3'-overhang, has no strand reannealing capabilities. Binds single-stranded (ss)DNA, dsDNA with a 3'-overhang and ssRNA. This chain is ATP-dependent DNA helicase Hel308, found in Pyrococcus abyssi (strain GE5 / Orsay).